A 1304-amino-acid polypeptide reads, in one-letter code: Neuronal cell adhesion molecule (1304 aa).

An N-terminal signal peptide occupies residues 1–24 (MQLKIMPKKKRLSAGRVPLILFLC). The Extracellular portion of the chain corresponds to 25–1167 (QMISALEVPL…ASRQVDIATQ (1143 aa)). 2 consecutive Ig-like domains span residues 46 to 134 (PTIT…AAVS) and 141 to 235 (PSRS…QPIS). 2 disulfide bridges follow: Cys-68-Cys-123 and Cys-167-Cys-218. Asn-83 carries N-linked (GlcNAc...) asparagine glycosylation. N-linked (GlcNAc...) asparagine glycans are attached at residues Asn-223, Asn-245, Asn-251, Asn-276, and Asn-314. Ig-like domains are found at residues 267 to 356 (PPTF…ISVR), 361 to 448 (PYWI…AFVN), 454 to 541 (PRIL…VHLE), and 545 to 632 (PTWI…AVLS). Disulfide bonds link Cys-292–Cys-340 and Cys-382–Cys-432. N-linked (GlcNAc...) asparagine glycosylation is found at Asn-433 and Asn-507. 2 cysteine pairs are disulfide-bonded: Cys-476/Cys-525 and Cys-567/Cys-616. N-linked (GlcNAc...) asparagine glycosylation is found at Asn-619, Asn-716, and Asn-802. 5 Fibronectin type-III domains span residues 649 to 744 (PPFD…TKAS), 746 to 843 (PDKN…SGED), 848 to 950 (APGN…TPEG), 954 to 1051 (APSS…VDEA), and 1064 to 1156 (QAVN…TGPA). N-linked (GlcNAc...) (complex) asparagine glycosylation occurs at Asn-858. Asn-993, Asn-1009, Asn-1019, Asn-1072, Asn-1083, and Asn-1115 each carry an N-linked (GlcNAc...) asparagine glycan. Residues 1168 to 1190 (GWFIGLMCAVALLILILLIVCFI) traverse the membrane as a helical segment. The Cytoplasmic portion of the chain corresponds to 1191–1304 (RRNKGGKYPV…SPVNAMNSFV (114 aa)). Positions 1199–1219 (PVKEKEDAHADPEIQPMKEDD) are enriched in basic and acidic residues. Residues 1199-1304 (PVKEKEDAHA…SPVNAMNSFV (106 aa)) are disordered. A Phosphothreonine modification is found at Thr-1221. The residue at position 1225 (Tyr-1225) is a Phosphotyrosine. Residue Ser-1226 is modified to Phosphoserine. Residues 1241 to 1250 (PSDRTVKKED) show a composition bias toward basic and acidic residues. 6 positions are modified to phosphoserine: Ser-1251, Ser-1254, Ser-1271, Ser-1290, Ser-1291, and Ser-1295. Positions 1288–1304 (NESSEAPSPVNAMNSFV) are enriched in polar residues.

This sequence belongs to the immunoglobulin superfamily. L1/neurofascin/NgCAM family. Constituent of a NFASC/NRCAM/ankyrin-G complex. Detected in a complex with CNTN1 and PTPRB. Interacts with GLDN/gliomedin. Interacts with MYOC. As to expression, detected in all the examined tissues. In the brain it was detected in the amygdala, caudate nucleus, corpus callosum, hippocampus, hypothalamus, substantia nigra, subthalamic nucleus and thalamus.

It localises to the cell membrane. The protein resides in the cell projection. It is found in the axon. The protein localises to the secreted. Cell adhesion protein that is required for normal responses to cell-cell contacts in brain and in the peripheral nervous system. Plays a role in neurite outgrowth in response to contactin binding. Plays a role in mediating cell-cell contacts between Schwann cells and axons. Plays a role in the formation and maintenance of the nodes of Ranvier on myelinated axons. Nodes of Ranvier contain clustered sodium channels that are crucial for the saltatory propagation of action potentials along myelinated axons. During development, nodes of Ranvier are formed by the fusion of two heminodes. Required for normal clustering of sodium channels at heminodes; not required for the formation of mature nodes with normal sodium channel clusters. Required, together with GLDN, for maintaining NFASC and sodium channel clusters at mature nodes of Ranvier. This is Neuronal cell adhesion molecule (NRCAM) from Homo sapiens (Human).